We begin with the raw amino-acid sequence, 285 residues long: Heme oxygenase 3, chloroplastic (285 aa).

The N-terminal 58 residues, 1-58, are a transit peptide targeting the chloroplast; the sequence is MATTRLNPSCHFPASTRLSCESYLGLRTTGRISYARTLTAPRGYLAVKANGGQASVVT. His89 serves as a coordination point for heme b. A compositionally biased stretch (basic and acidic residues) spans 89-105; it reads HTKDQAREGEKESRSPE. The tract at residues 89 to 109 is disordered; sequence HTKDQAREGEKESRSPEEGPV.

Belongs to the heme oxygenase family. Widely expressed at low levels.

The protein localises to the plastid. The protein resides in the chloroplast. The catalysed reaction is heme b + 3 reduced [NADPH--hemoprotein reductase] + 3 O2 = biliverdin IXalpha + CO + Fe(2+) + 3 oxidized [NADPH--hemoprotein reductase] + 3 H2O + H(+). Catalyzes the opening of the heme ring to form the open-chain tetrapyrrole biliverdin IX with the release of iron and carbon monoxide (CO). Produces specifically the biliverdin IX-alpha isomer. Plays a minor role in phytochrome assembly and photomorphogenesis. The sequence is that of Heme oxygenase 3, chloroplastic (HO3) from Arabidopsis thaliana (Mouse-ear cress).